A 319-amino-acid chain; its full sequence is tRNA U34 carboxymethyltransferase (319 aa).

Residues Lys-88, Trp-102, Lys-107, Gly-126, 176–177 (LE), Met-192, Tyr-196, and Arg-311 contribute to the carboxy-S-adenosyl-L-methionine site.

It belongs to the class I-like SAM-binding methyltransferase superfamily. CmoB family. In terms of assembly, homotetramer.

The enzyme catalyses carboxy-S-adenosyl-L-methionine + 5-hydroxyuridine(34) in tRNA = 5-carboxymethoxyuridine(34) in tRNA + S-adenosyl-L-homocysteine + H(+). In terms of biological role, catalyzes carboxymethyl transfer from carboxy-S-adenosyl-L-methionine (Cx-SAM) to 5-hydroxyuridine (ho5U) to form 5-carboxymethoxyuridine (cmo5U) at position 34 in tRNAs. The sequence is that of tRNA U34 carboxymethyltransferase from Pseudomonas syringae pv. tomato (strain ATCC BAA-871 / DC3000).